Consider the following 389-residue polypeptide: tRNA-specific 2-thiouridylase MnmA (389 aa).

Residues 9–16 and Met35 each bind ATP; that span reads GMSGGVDS. Positions 95 to 97 are interaction with target base in tRNA; that stretch reads NPD. The active-site Nucleophile is Cys100. Cys100 and Cys196 form a disulfide bridge. Gly124 lines the ATP pocket. The tract at residues 146–148 is interaction with tRNA; it reads KDQ. Catalysis depends on Cys196, which acts as the Cysteine persulfide intermediate. An interaction with tRNA region spans residues 308-309; that stretch reads RY.

Belongs to the MnmA/TRMU family.

Its subcellular location is the cytoplasm. It carries out the reaction S-sulfanyl-L-cysteinyl-[protein] + uridine(34) in tRNA + AH2 + ATP = 2-thiouridine(34) in tRNA + L-cysteinyl-[protein] + A + AMP + diphosphate + H(+). Its function is as follows. Catalyzes the 2-thiolation of uridine at the wobble position (U34) of tRNA, leading to the formation of s(2)U34. In Burkholderia ambifaria (strain MC40-6), this protein is tRNA-specific 2-thiouridylase MnmA.